The sequence spans 352 residues: tRNA uridine(34) hydroxylase (352 aa).

One can recognise a Rhodanese domain in the interval 146-240 (DNPDTLFVDM…YARKAREQGL (95 aa)). Catalysis depends on cysteine 200, which acts as the Cysteine persulfide intermediate. The span at 315–328 (ETEQRARRAGRENG) shows a compositional bias: basic and acidic residues. The interval 315–352 (ETEQRARRAGRENGAKIFNKSRHRLQDGLNSTSLQSVE) is disordered. The span at 342–352 (GLNSTSLQSVE) shows a compositional bias: polar residues.

The protein belongs to the TrhO family.

It catalyses the reaction uridine(34) in tRNA + AH2 + O2 = 5-hydroxyuridine(34) in tRNA + A + H2O. In terms of biological role, catalyzes oxygen-dependent 5-hydroxyuridine (ho5U) modification at position 34 in tRNAs. In Photorhabdus laumondii subsp. laumondii (strain DSM 15139 / CIP 105565 / TT01) (Photorhabdus luminescens subsp. laumondii), this protein is tRNA uridine(34) hydroxylase.